Consider the following 187-residue polypeptide: Adenine phosphoribosyltransferase (187 aa).

This sequence belongs to the purine/pyrimidine phosphoribosyltransferase family. As to quaternary structure, homodimer.

The protein localises to the cytoplasm. The enzyme catalyses AMP + diphosphate = 5-phospho-alpha-D-ribose 1-diphosphate + adenine. It participates in purine metabolism; AMP biosynthesis via salvage pathway; AMP from adenine: step 1/1. Functionally, catalyzes a salvage reaction resulting in the formation of AMP, that is energically less costly than de novo synthesis. This is Adenine phosphoribosyltransferase from Yersinia pestis (strain Pestoides F).